A 281-amino-acid chain; its full sequence is Bifunctional protein FolD (281 aa).

NADP(+) contacts are provided by residues 165 to 167 (GRG), Thr-192, and Val-233.

This sequence belongs to the tetrahydrofolate dehydrogenase/cyclohydrolase family. Homodimer.

The enzyme catalyses (6R)-5,10-methylene-5,6,7,8-tetrahydrofolate + NADP(+) = (6R)-5,10-methenyltetrahydrofolate + NADPH. It catalyses the reaction (6R)-5,10-methenyltetrahydrofolate + H2O = (6R)-10-formyltetrahydrofolate + H(+). Its pathway is one-carbon metabolism; tetrahydrofolate interconversion. Its function is as follows. Catalyzes the oxidation of 5,10-methylenetetrahydrofolate to 5,10-methenyltetrahydrofolate and then the hydrolysis of 5,10-methenyltetrahydrofolate to 10-formyltetrahydrofolate. The chain is Bifunctional protein FolD from Corynebacterium diphtheriae (strain ATCC 700971 / NCTC 13129 / Biotype gravis).